The chain runs to 413 residues: Enhanced ethylene response protein 5 (413 aa).

Residues 216–402 form the PCI domain; it reads VTYMYYTGRL…KVVVLSKQDP (187 aa).

Interacts with EIN2 (via C-terminus). May also interact weakly with CSN8. Interacts with DSS1(V), AMPD, SAC3A, SAC3B and At5g61290 (AC Q9FLK4). Interacts with UCH1 and UCH2. Interacts with NUP1, anchoring the TREX-2 complex on the nuclear pore complex. In terms of tissue distribution, expressed at low levels in roots, leaves, stems and shoots. Detected in seedlings, roots, leaves and anthers.

It is found in the nucleus. In terms of biological role, involved in the regulation of ethylene response. Probable TREX-2 component required for nuclear RNA export. The TREX-2 complex (transcription and export complex 2) functions in docking export-competent ribonucleoprotein particles (mRNPs) to the nuclear entrance of the nuclear pore complex (nuclear basket). TREX-2 participates in mRNA export and accurate chromatin positioning in the nucleus by tethering genes to the nuclear periphery. In Arabidopsis thaliana (Mouse-ear cress), this protein is Enhanced ethylene response protein 5.